A 259-amino-acid chain; its full sequence is Phosphate import ATP-binding protein PstB 1 (259 aa).

One can recognise an ABC transporter domain in the interval 7 to 254 (VKPEDVYQIN…PDDHRTKDYI (248 aa)). 45–52 (GPSGCGKS) contacts ATP.

The protein belongs to the ABC transporter superfamily. Phosphate importer (TC 3.A.1.7) family. The complex is composed of two ATP-binding proteins (PstB), two transmembrane proteins (PstC and PstA) and a solute-binding protein (PstS).

The protein localises to the cell membrane. The catalysed reaction is phosphate(out) + ATP + H2O = ADP + 2 phosphate(in) + H(+). Functionally, part of the ABC transporter complex PstSACB involved in phosphate import. Responsible for energy coupling to the transport system. The protein is Phosphate import ATP-binding protein PstB 1 of Bacillus licheniformis (strain ATCC 14580 / DSM 13 / JCM 2505 / CCUG 7422 / NBRC 12200 / NCIMB 9375 / NCTC 10341 / NRRL NRS-1264 / Gibson 46).